A 339-amino-acid polypeptide reads, in one-letter code: MAQLGAVVAVASSFFCASLFSAVHKIEEGHIGVYYRGGALLTSTSGPGFHLMLPFITSYKSVQTTLQTDEVKNVPCGTSGGVMIYFDRIEVVNFLVPNAVYDIVKNYTADYDKALIFNKIHHELNQFCSVHTLQEVYIELFDQIDENLKLALQQDLTSMAPGLVIQAVRVTKPNIPEAIRRNYELMESEKTKLLIAAQKQKVVEKEAETERKKALIEAEKVAQVAEITYGQKVMEKETEKKISEIEDAAFLAREKAKADAECYTAMKIAEANKLKLTPEYLQLMKYKAIASNSKIYFGKDIPNMFMDSAGSVSKQFEGLADKLSFGLEDEPLETATKEN.

Residues 1-3 lie on the Cytoplasmic side of the membrane; sequence MAQ. The helical transmembrane segment at 4–24 threads the bilayer; that stretch reads LGAVVAVASSFFCASLFSAVH. The Lumenal portion of the chain corresponds to 25-339; sequence KIEEGHIGVY…EPLETATKEN (315 aa). An N-linked (GlcNAc...) asparagine glycan is attached at asparagine 106. Positions 177-309 are interaction with ERLIN1; that stretch reads EAIRRNYELM…DIPNMFMDSA (133 aa). Lysine 267 carries the post-translational modification N6-acetyllysine.

This sequence belongs to the band 7/mec-2 family. In terms of assembly, forms a heteromeric complex with ERLIN1. In complex with ERLIN1, interacts with RNF170. Interacts with activated ITPR1, independently of the degree of ITPR1 polyubiquitination. Interacts with SCAP, INSIG1, SREBF1 and SREBF2 under cholesterol sufficiency conditions; indicative for an association with the SCAP-SREBP-INSIG complex. Probably part of an AMFR/gp78 and INSIG1-containing ubiquitin ligase complex involved in ERAD of HMGCR. Interacts with TMUB1; TMUB1 bridges the association with AMFR. Interacts with SYVN1 and RNF139. Interacts with TMEM259. Interacts with TMEM41B. Deubiquitinated by USP25; leading to stabilization. Ubiquitous.

The protein resides in the endoplasmic reticulum membrane. Its function is as follows. Component of the ERLIN1/ERLIN2 complex which mediates the endoplasmic reticulum-associated degradation (ERAD) of inositol 1,4,5-trisphosphate receptors (IP3Rs) such as ITPR1. Promotes sterol-accelerated ERAD of HMGCR probably implicating an AMFR/gp78-containing ubiquitin ligase complex. Involved in regulation of cellular cholesterol homeostasis by regulation the SREBP signaling pathway. May promote ER retention of the SCAP-SREBF complex. The polypeptide is Erlin-2 (ERLIN2) (Homo sapiens (Human)).